The following is a 359-amino-acid chain: Uroporphyrinogen decarboxylase (359 aa).

Residues Arg-28, Ala-30, Arg-32, Asp-79, Tyr-157, Ser-212, and His-335 each coordinate coproporphyrinogen III.

It belongs to the uroporphyrinogen decarboxylase family. Monomer.

Its subcellular location is the nucleus. It is found in the cytoplasm. The catalysed reaction is uroporphyrinogen III + 4 H(+) = coproporphyrinogen III + 4 CO2. It catalyses the reaction uroporphyrinogen I + 4 H(+) = coproporphyrinogen I + 4 CO2. The protein operates within porphyrin-containing compound metabolism; protoporphyrin-IX biosynthesis; coproporphyrinogen-III from 5-aminolevulinate: step 4/4. Functionally, catalyzes the sequential decarboxylation of four acetate groups of uroporphyrinogen-III (octacarboxyporphyrin) to yield coproporphyrinogen-III (tetracarboxyporphyrin) with the formation of intermediate hepta-, hexa- and penta-carboxylate porphyrinogens in the heme biosynthesis pathway. Acts on a number of porphyrinogens, but only coproporphyrinogen III can ultimately be converted to heme. This Schizosaccharomyces pombe (strain 972 / ATCC 24843) (Fission yeast) protein is Uroporphyrinogen decarboxylase (hem12).